Here is a 920-residue protein sequence, read N- to C-terminus: Whirlin (920 aa).

A PDZ 1 domain is found at 141-224 (LVSLRRAKAH…LVLSVYSAGR (84 aa)). Positions 241 to 262 (QGRSTSPPSSLPHGSTLRQHED) are disordered. A compositionally biased stretch (polar residues) spans 242–257 (GRSTSPPSSLPHGSTL). The 83-residue stretch at 278–360 (KVNLVLGDGR…LILTVKDVGR (83 aa)) folds into the PDZ 2 domain. Disordered stretches follow at residues 502 to 536 (MKAR…TSTT), 561 to 603 (CETT…QGHD), 630 to 730 (FSAP…AMGA), and 752 to 828 (RALP…PTST). Positions 520-536 (SYSDTGSSTGSHGTSTT) are enriched in low complexity. A compositionally biased stretch (polar residues) spans 561 to 570 (CETTQGSTNA). 2 stretches are compositionally biased toward pro residues: residues 589–598 (IKPPPPPPPL) and 636–651 (RSPP…PTPG). Polar residues predominate over residues 655 to 674 (ARDSPSSPIYASISHANPSS). A Phosphoserine modification is found at Ser-698. 2 stretches are compositionally biased toward polar residues: residues 756–775 (QTRT…TLSE) and 785–800 (EAST…NTKN). Over residues 802-813 (NGKELPQTERTT) the composition is skewed to basic and acidic residues. In terms of domain architecture, PDZ 3 spans 829-912 (LIRVRKSAAT…TKERDYIDFL (84 aa)).

In terms of assembly, forms homooligomers. Interacts (via C-terminal PDZ domain) with MYO15A; this interaction is necessary for localization of WHRN to stereocilia tips. Interacts (via C-terminal PDZ domain) with MPP1/p55. Interacts with LRRC4C/NGL1. Interacts with MYO7A. Interacts with RPGR. Interacts with EPS8. Interacts with CASK. Interacts with CIB2. Component of USH2 complex, composed of ADGRV1, PDZD7, USH2A and WHRN. Interacts (via PDZ domains) with PDZD7; the interaction is direct. Interacts (via N-terminal PDZ domain) with USH2A (via cytoplasmic region). Interacts with ADGRV1/MASS1 (via cytoplasmic region). Ubiquitous. Highly expressed in heart, spleen, lung and liver. Highly expressed in brain, in the olfactory bulb, thalamus, layers III-V of the cerebral cortex and the molecular layer of cerebellum. Detected in soma and dendrites of thalamic neurons, and in cerebrum in cell bodies and apical dendrites of pyramidal neurons. Expressed in retina and inner ear.

The protein resides in the cytoplasm. It localises to the cell projection. Its subcellular location is the stereocilium. It is found in the growth cone. The protein localises to the synapse. Functionally, involved in hearing and vision as member of the USH2 complex. Necessary for elongation and maintenance of inner and outer hair cell stereocilia in the organ of Corti in the inner ear. Involved in the maintenance of the hair bundle ankle region, which connects stereocilia in cochlear hair cells of the inner ear. In retina photoreceptors, required for the maintenance of periciliary membrane complex that seems to play a role in regulating intracellular protein transport. The sequence is that of Whirlin from Rattus norvegicus (Rat).